Here is a 226-residue protein sequence, read N- to C-terminus: Elongation factor 1-delta 2 (226 aa).

A disordered region spans residues 82–131 (TACSVSPTADQKAPAADEEDDDDVDLFGEETEEEKKAAEERAAAVKASGK). Residues 97-113 (ADEEDDDDVDLFGEETE) show a composition bias toward acidic residues. A compositionally biased stretch (basic and acidic residues) spans 114 to 124 (EEKKAAEERAA).

Belongs to the EF-1-beta/EF-1-delta family. In terms of assembly, EF-1 is composed of 4 subunits: alpha, beta (1B-alpha=beta'), delta (1B-beta), and gamma (1B-gamma).

In terms of biological role, EF-1-beta and EF-1-beta' stimulate the exchange of GDP bound to EF-1-alpha to GTP. In Oryza sativa subsp. japonica (Rice), this protein is Elongation factor 1-delta 2.